The sequence spans 128 residues: Small ribosomal subunit protein uS11 (128 aa).

The protein belongs to the universal ribosomal protein uS11 family. Part of the 30S ribosomal subunit. Interacts with proteins S7 and S18. Binds to IF-3.

Functionally, located on the platform of the 30S subunit, it bridges several disparate RNA helices of the 16S rRNA. Forms part of the Shine-Dalgarno cleft in the 70S ribosome. This chain is Small ribosomal subunit protein uS11, found in Synechococcus sp. (strain JA-3-3Ab) (Cyanobacteria bacterium Yellowstone A-Prime).